A 246-amino-acid polypeptide reads, in one-letter code: 3-deoxy-manno-octulosonate cytidylyltransferase (246 aa).

This sequence belongs to the KdsB family. As to quaternary structure, homodimer.

The protein resides in the cytoplasm. The enzyme catalyses 3-deoxy-alpha-D-manno-oct-2-ulosonate + CTP = CMP-3-deoxy-beta-D-manno-octulosonate + diphosphate. It functions in the pathway nucleotide-sugar biosynthesis; CMP-3-deoxy-D-manno-octulosonate biosynthesis; CMP-3-deoxy-D-manno-octulosonate from 3-deoxy-D-manno-octulosonate and CTP: step 1/1. The protein operates within bacterial outer membrane biogenesis; lipopolysaccharide biosynthesis. In terms of biological role, activates KDO (a required 8-carbon sugar) for incorporation into bacterial lipopolysaccharide in Gram-negative bacteria. The chain is 3-deoxy-manno-octulosonate cytidylyltransferase (kpsU) from Escherichia coli.